The primary structure comprises 156 residues: Ribosomal RNA large subunit methyltransferase H (156 aa).

Residues leucine 73, glycine 104, and 123–128 (ISSMTL) contribute to the S-adenosyl-L-methionine site.

This sequence belongs to the RNA methyltransferase RlmH family. In terms of assembly, homodimer.

It is found in the cytoplasm. It catalyses the reaction pseudouridine(1915) in 23S rRNA + S-adenosyl-L-methionine = N(3)-methylpseudouridine(1915) in 23S rRNA + S-adenosyl-L-homocysteine + H(+). Specifically methylates the pseudouridine at position 1915 (m3Psi1915) in 23S rRNA. The polypeptide is Ribosomal RNA large subunit methyltransferase H (Burkholderia lata (strain ATCC 17760 / DSM 23089 / LMG 22485 / NCIMB 9086 / R18194 / 383)).